The following is a 603-amino-acid chain: Polypeptide N-acetylgalactosaminyltransferase 10 (603 aa).

The Cytoplasmic portion of the chain corresponds to 1–11 (MRRKEKRLLQA). A helical; Signal-anchor for type II membrane protein membrane pass occupies residues 12-31 (VALVLAALVLLPNVGLWALY). The Lumenal portion of the chain corresponds to 32 to 603 (RERQPDGTPG…STVLEKFNRN (572 aa)). A disordered region spans residues 38-59 (GTPGGSGAAVAPAAGQGSHSRQ). Residues 45–55 (AAVAPAAGQGS) show a composition bias toward low complexity. 2 N-linked (GlcNAc...) asparagine glycosylation sites follow: N124 and N146. Disulfide bonds link C135–C365, C356–C432, C471–C488, C523–C538, and C563–C578. Residues 144-253 (LPNTSIIIPF…VNWLPPLLDR (110 aa)) form a catalytic subdomain A region. H154, E156, D185, and R214 together coordinate substrate. D237 is a Mn(2+) binding site. S238 serves as a coordination point for substrate. H239 serves as a coordination point for Mn(2+). Residues 311-373 (PFESPVMAGG…PCSRVGHIYR (63 aa)) form a catalytic subdomain B region. Residue W342 participates in substrate binding. H370 serves as a coordination point for Mn(2+). The substrate site is built by R373 and Y378. Residues 373 to 384 (RKYVPYKVPAGV) form a flexible loop region. The 133-residue stretch at 458–590 (AAWGEIRNVG…SSLTQQWLFE (133 aa)) folds into the Ricin B-type lectin domain. N593 carries an N-linked (GlcNAc...) asparagine glycan.

It belongs to the glycosyltransferase 2 family. GalNAc-T subfamily. Mn(2+) serves as cofactor. Widely expressed. Expressed at high level in small intestine, and at intermediate levels in stomach, pancreas, ovary, thyroid gland and spleen. Weakly expressed in other tissues.

It localises to the golgi apparatus membrane. The enzyme catalyses L-seryl-[protein] + UDP-N-acetyl-alpha-D-galactosamine = a 3-O-[N-acetyl-alpha-D-galactosaminyl]-L-seryl-[protein] + UDP + H(+). The catalysed reaction is L-threonyl-[protein] + UDP-N-acetyl-alpha-D-galactosamine = a 3-O-[N-acetyl-alpha-D-galactosaminyl]-L-threonyl-[protein] + UDP + H(+). Its pathway is protein modification; protein glycosylation. In terms of biological role, catalyzes the initial reaction in O-linked oligosaccharide biosynthesis, the transfer of an N-acetyl-D-galactosamine residue to a serine or threonine residue on the protein receptor. Has activity toward Muc5Ac and EA2 peptide substrates. This chain is Polypeptide N-acetylgalactosaminyltransferase 10 (GALNT10), found in Homo sapiens (Human).